Consider the following 555-residue polypeptide: MKDTVMTYLLENSIKFKGKPNPKAAMGKILGENPDLRSKVKEVNQVISEVLKEIETMSLEEQQAKLDELAPEGLGQKTERKRKEIELKNVKGNVVMRFAPNPSGPLHIGHARASVLNDFFSKKYNGKLVLRLEDTDAKRVLPEAYEMIQEDLKWLGVKVDEVIVQSERLETYYEYGRKLIEMGHAYVCDCDADEFRTLREQGLPCKCRDTTPEENIALWEKMLAGELDNVAVRLKTDIAHKNPSIRDFPIFRIERTPHPKNGTKYHVYPLMNLSVTVDDHLLGMTHVLRGKDHIVNTEKQEYIYNYFGWEIPEYVHYGILKIEGPVLSTSKMHAGILSGEYSGWDDARLGTLRALRKRGIRPEALYKLMVEIGIKQADVRFAWENLYAANKDIIDKDARRFFFVESPKKLVISGAENRKIDLRMHPDRSELGNRELLFDGEIYVSDDLEAGKMYRLMELFNIVVEKVENDIIYAKYDSDDFKVAKTNKASIIHWIPVKDSIPVTVIDENAEKIEGFAEKDFAVVKEDDFVQFERFGFVRIDEKLDNKYTCYLTHK.

The short motif at 100-110 (PNPSGPLHIGH) is the 'HIGH' region element.

This sequence belongs to the class-I aminoacyl-tRNA synthetase family. Glutamate--tRNA ligase type 2 subfamily.

It is found in the cytoplasm. The catalysed reaction is tRNA(Glu) + L-glutamate + ATP = L-glutamyl-tRNA(Glu) + AMP + diphosphate. In terms of biological role, catalyzes the attachment of glutamate to tRNA(Glu) in a two-step reaction: glutamate is first activated by ATP to form Glu-AMP and then transferred to the acceptor end of tRNA(Glu). The polypeptide is Glutamate--tRNA ligase (Methanococcus maripaludis (strain DSM 14266 / JCM 13030 / NBRC 101832 / S2 / LL)).